A 584-amino-acid polypeptide reads, in one-letter code: Membrane protein insertase YidC (584 aa).

5 helical membrane passes run Ser-5 to Pro-25, Phe-358 to Tyr-378, Leu-428 to Phe-448, Ile-478 to Leu-498, and Ile-516 to Leu-536. The disordered stretch occupies residues Ala-563–Arg-584. Residues Ala-574–Arg-584 show a composition bias toward basic residues.

This sequence belongs to the OXA1/ALB3/YidC family. Type 1 subfamily. As to quaternary structure, interacts with the Sec translocase complex via SecD. Specifically interacts with transmembrane segments of nascent integral membrane proteins during membrane integration.

Its subcellular location is the cell inner membrane. Functionally, required for the insertion and/or proper folding and/or complex formation of integral membrane proteins into the membrane. Involved in integration of membrane proteins that insert both dependently and independently of the Sec translocase complex, as well as at least some lipoproteins. Aids folding of multispanning membrane proteins. The sequence is that of Membrane protein insertase YidC from Prosthecochloris aestuarii (strain DSM 271 / SK 413).